Here is a 151-residue protein sequence, read N- to C-terminus: Caveolin-3 (151 aa).

The Cytoplasmic portion of the chain corresponds to Met1–Pro83. A Glycyl lysine isopeptide (Lys-Gly) (interchain with G-Cter in SUMO3) cross-link involves residue Lys38. The required for interaction with DAG1 stretch occupies residues Thr64–Ile114. The helical intramembrane region spans Leu84–Val104. The Cytoplasmic portion of the chain corresponds to Pro105–Val151.

The protein belongs to the caveolin family. Homooligomer. Interacts with DYSF. Interacts with DLG1 and KCNA5; forms a ternary complex. Interacts with DAG1 (via its C-terminal); the interaction prevents binding of DAG1 with DMD. Interacts with TRIM72. Interacts with MUSK; may regulate MUSK signaling. Interacts with POPDC1. Interacts with CAVIN1, CAVIN2 and CAVIN4. Sumoylation with SUMO3 by PIAS4 may reduce agonist-induced internalization and desensitization of adrenergic receptor ABRD2. As to expression, expressed specifically in skeletal muscle and heart.

Its subcellular location is the golgi apparatus membrane. The protein resides in the cell membrane. It is found in the membrane. The protein localises to the caveola. It localises to the sarcolemma. Functionally, may act as a scaffolding protein within caveolar membranes. Interacts directly with G-protein alpha subunits and can functionally regulate their activity. May also regulate voltage-gated potassium channels. Plays a role in the sarcolemma repair mechanism of both skeletal muscle and cardiomyocytes that permits rapid resealing of membranes disrupted by mechanical stress. Mediates the recruitment of CAVIN2 and CAVIN3 proteins to the caveolae. This chain is Caveolin-3 (CAV3), found in Sus scrofa (Pig).